The following is a 118-amino-acid chain: uncharacterized protein (118 aa).

Residues 7-27 traverse the membrane as a helical segment; the sequence is LLTGLFVGGIIGGAAVLLTAP. A coiled-coil region spans residues 31–118; sequence KQLREKMKTN…IRQLEKTLQN (88 aa).

It is found in the cell membrane. This is an uncharacterized protein from Bacillus subtilis (strain 168).